The chain runs to 505 residues: Putative pentatricopeptide repeat-containing protein At1g26500 (505 aa).

PPR repeat units lie at residues 145–179, 180–210, 214–248, 249–279, 285–319, 320–350, and 351–385; these read NDKT…GYLY, NVET…LKEF, DEIT…GFDV, DIEA…MVSK, DGGF…GVYV, DNLT…VENP, and DISI…GCEP.

It belongs to the PPR family. P subfamily.

This chain is Putative pentatricopeptide repeat-containing protein At1g26500, found in Arabidopsis thaliana (Mouse-ear cress).